The chain runs to 1488 residues: Chromosome partition protein MukB (1488 aa).

34-41 contributes to the ATP binding site; sequence GGNGAGKS. Coiled coils occupy residues 326–418, 444–472, and 509–602; these read LEAD…QYNQ, LDTF…QTAH, and RHLA…QRAP. The interval 666-783 is flexible hinge; that stretch reads PGGAEDQRLN…SLPIFGRAAR (118 aa). Coiled coils occupy residues 835 to 923, 977 to 1116, and 1209 to 1265; these read EAEI…AKLE, EMLS…AKAG, and VEAI…LQSV. The disordered stretch occupies residues 1049–1074; sequence ADSGAEERARQRRDELHAQLSNNRSR. Over residues 1051–1065 the composition is skewed to basic and acidic residues; that stretch reads SGAEERARQRRDELH.

Belongs to the SMC family. MukB subfamily. Homodimerization via its hinge domain. Binds to DNA via its C-terminal region. Interacts, and probably forms a ternary complex, with MukE and MukF via its C-terminal region. The complex formation is stimulated by calcium or magnesium. Interacts with tubulin-related protein FtsZ.

The protein resides in the cytoplasm. The protein localises to the nucleoid. In terms of biological role, plays a central role in chromosome condensation, segregation and cell cycle progression. Functions as a homodimer, which is essential for chromosome partition. Involved in negative DNA supercoiling in vivo, and by this means organize and compact chromosomes. May achieve or facilitate chromosome segregation by condensation DNA from both sides of a centrally located replisome during cell division. This Salmonella typhimurium (strain LT2 / SGSC1412 / ATCC 700720) protein is Chromosome partition protein MukB.